The primary structure comprises 105 residues: Large ribosomal subunit protein uL24 (105 aa).

This sequence belongs to the universal ribosomal protein uL24 family. Part of the 50S ribosomal subunit.

Functionally, one of two assembly initiator proteins, it binds directly to the 5'-end of the 23S rRNA, where it nucleates assembly of the 50S subunit. One of the proteins that surrounds the polypeptide exit tunnel on the outside of the subunit. This chain is Large ribosomal subunit protein uL24, found in Psychrobacter cryohalolentis (strain ATCC BAA-1226 / DSM 17306 / VKM B-2378 / K5).